The following is a 230-amino-acid chain: Potassium/proton antiporter CemA (230 aa).

4 helical membrane-spanning segments follow: residues 7 to 27, 106 to 126, 145 to 165, and 181 to 201; these read LPSFLYLVFIVLLPWGVSFSF, IILHFSTNIICLAILSGSFFL, LNDSVKAFFILLVTDFFVGFH, and LGWVPNELIFTIFVCSFPVIL.

It belongs to the CemA family.

The protein resides in the plastid. It is found in the chloroplast inner membrane. It catalyses the reaction K(+)(in) + H(+)(out) = K(+)(out) + H(+)(in). Its function is as follows. Contributes to K(+)/H(+) antiport activity by supporting proton efflux to control proton extrusion and homeostasis in chloroplasts in a light-dependent manner to modulate photosynthesis. Prevents excessive induction of non-photochemical quenching (NPQ) under continuous-light conditions. Indirectly promotes efficient inorganic carbon uptake into chloroplasts. In Oryza nivara (Indian wild rice), this protein is Potassium/proton antiporter CemA.